A 239-amino-acid chain; its full sequence is uncharacterized protein (239 aa).

An N-terminal signal peptide occupies residues 1-23 (MKTMVAMLLAAVGVAVSASSTLA). A compositionally biased stretch (basic and acidic residues) spans 220–230 (AHPKQTLRDQR). A disordered region spans residues 220 to 239 (AHPKQTLRDQRPAGGDEITK).

This is an uncharacterized protein from Sinorhizobium fredii (strain NBRC 101917 / NGR234).